Consider the following 537-residue polypeptide: Tyrosine-protein kinase Fyn (537 aa).

G2 carries the N-myristoyl glycine lipid modification. Residues C3 and C6 are each lipidated (S-palmitoyl cysteine). T12 carries the post-translational modification Phosphothreonine; by PKC. The SH3 domain maps to T82–S143. Residues W149 to C246 form the SH2 domain. Residues L271–F524 enclose the Protein kinase domain. ATP-binding positions include L277 to V285 and K299. D390 acts as the Proton acceptor in catalysis. Y420 is subject to Phosphotyrosine; by autocatalysis. Y531 is modified (phosphotyrosine).

It belongs to the protein kinase superfamily. Tyr protein kinase family. SRC subfamily. Associates through its SH3 domain, to the p85 subunit of phosphatidylinositol 3-kinase. Mn(2+) serves as cofactor.

It carries out the reaction L-tyrosyl-[protein] + ATP = O-phospho-L-tyrosyl-[protein] + ADP + H(+). Inhibited by phosphorylation of Tyr-531 by leukocyte common antigen and activated by dephosphorylation of this site. Its function is as follows. Tyrosine-protein kinase implicated in the control of cell growth. Plays a role in the regulation of intracellular calcium levels. Required in brain development and mature brain function with important roles in the regulation of axon growth, axon guidance, and neurite extension. The polypeptide is Tyrosine-protein kinase Fyn (fyn) (Xiphophorus hellerii (Green swordtail)).